We begin with the raw amino-acid sequence, 959 residues long: MTEAKSYKDTVNLPQTKFDMRANAVKREPELQKFWAENQIYETLSENNPGDIFILHDGPPYANGSLHMGHALNKTLKDIINKYKLQRGYKARYVPGWDCHGLPIELKVLQSMKQKEREDLTPLKLRHKARDFALSTQKEQSESFQRFGVWGDWEHPYLTLTPDYEAAQIGVFGQMALKGYIYRGLKPVHWSPSSQTALAEAELEYPEGHTSRSVYAVFPITKASDTAKKVLTPYLKDLGVAIWTTTPWTLPGNLAVALNPDLTYAVVESGKPVCKHQYFIVAADLVDKLSATFETPLTVKATLKGEDLEHTTYRHPLFDRESEILIGGDYVTTESGTGLVHTAPGHGQEDYIVGQRYGLPVLSPVDEKGNFTSEAGQFAGLNVLKDANEAIIKELEEKGALLKEEPYQHKYPYDWRTKKPTIFRATEQWFASVEGFRDTALEAIKNVTWIPPQGENRITPMVADRSDWCISRQRSWGVPIPVFYDEETNEPLLNEETINHVQAIFAEKGSDAWWELSVEELLPQPYRNNGRKYRKGMDTMDVWFDSGSSWAAVAKQRPELSYPVDIYLEGSDQHRGWFQSSLLTSVATNGIAPYKMVLTHGFVLDEQGRKMSKSIGNIVDPNMIINGGKDQKKEPAYGADVLRLWVSSVDYSSDVPIGQNILKQLVDVRNKIRNTARFLLGNLHDFDPEKDTVAYEDLPELDRYMLHRITEVFTEVTEAFETFQFFRFFQVVQNFCVVDLSNFYLDIAKDRLYISDPNNLRRRSCQTVLKVALENLAKSIAPVLCHLAEDIWQFLPYKTPYKSVFEAGWVELESEWKRPELTPKWSKFRQIRDEVNKVMELARKDKMIGSSLDAKVLLYVSDKELREHLDSFNPSDSLSNNRVDELRYLFLASQVDLVDSPKTIGKANYKSESETLGVAIVKADGEKCDRCWNYSTHVGEFVDDPTLCERCNAALKGEF.

The 'HIGH' region motif lies at proline 60 to histidine 70. Glutamate 569 lines the L-isoleucyl-5'-AMP pocket. The 'KMSKS' region motif lies at lysine 610 to serine 614. Residue lysine 613 participates in ATP binding. Cysteine 928, cysteine 931, cysteine 948, and cysteine 951 together coordinate Zn(2+).

This sequence belongs to the class-I aminoacyl-tRNA synthetase family. IleS type 1 subfamily. As to quaternary structure, monomer. Zn(2+) serves as cofactor.

Its subcellular location is the cytoplasm. The enzyme catalyses tRNA(Ile) + L-isoleucine + ATP = L-isoleucyl-tRNA(Ile) + AMP + diphosphate. Functionally, catalyzes the attachment of isoleucine to tRNA(Ile). As IleRS can inadvertently accommodate and process structurally similar amino acids such as valine, to avoid such errors it has two additional distinct tRNA(Ile)-dependent editing activities. One activity is designated as 'pretransfer' editing and involves the hydrolysis of activated Val-AMP. The other activity is designated 'posttransfer' editing and involves deacylation of mischarged Val-tRNA(Ile). The polypeptide is Isoleucine--tRNA ligase (Gloeothece citriformis (strain PCC 7424) (Cyanothece sp. (strain PCC 7424))).